Consider the following 124-residue polypeptide: MTTINQLVRKPRQATTYKSASPALDKCPQRRGVCTRVYTTTPKKPNSALRKVAKVRLTNQEEVISYIGGEGHNLQEHSVVLIRGGRVKDLPGVRYHTVRGSLDAAGVAKRRQGRSKYGAKRPKS.

Positions 1 to 24 (MTTINQLVRKPRQATTYKSASPAL) are disordered. D89 is modified (3-methylthioaspartic acid).

This sequence belongs to the universal ribosomal protein uS12 family. Part of the 30S ribosomal subunit. Contacts proteins S8 and S17. May interact with IF1 in the 30S initiation complex.

In terms of biological role, with S4 and S5 plays an important role in translational accuracy. Its function is as follows. Interacts with and stabilizes bases of the 16S rRNA that are involved in tRNA selection in the A site and with the mRNA backbone. Located at the interface of the 30S and 50S subunits, it traverses the body of the 30S subunit contacting proteins on the other side and probably holding the rRNA structure together. The combined cluster of proteins S8, S12 and S17 appears to hold together the shoulder and platform of the 30S subunit. This Xanthomonas axonopodis pv. citri (strain 306) protein is Small ribosomal subunit protein uS12.